Reading from the N-terminus, the 282-residue chain is Probable metal transport system membrane protein TM_0125 (282 aa).

Transmembrane regions (helical) follow at residues 33–53 (AFVG…IVVF), 58–78 (FIGD…TLIG), 79–99 (ADHR…VSLF), 109–129 (AIGI…SVSG), 148–168 (STDV…TVVF), 184–204 (FYGI…AITV), 210–230 (VVGV…SKIF), 234–254 (FWSL…AGFL), and 259–279 (LDLP…LPML).

This sequence belongs to the ABC-3 integral membrane protein family.

It localises to the cell inner membrane. Functionally, part of an ATP-driven transport system TM_0123/TM_0124/TM_0125 for a metal. In Thermotoga maritima (strain ATCC 43589 / DSM 3109 / JCM 10099 / NBRC 100826 / MSB8), this protein is Probable metal transport system membrane protein TM_0125.